The primary structure comprises 372 residues: Protein zntB (372 aa).

The next 3 helical transmembrane spans lie at 15–35 (LIMCFLSGLSTAIGGLYVIFI), 42–62 (LLGHLLSFSSGVMIYISFMDL), and 70–90 (IGFYNANIWFFVGIIFFAVIL). The tract at residues 99–166 (ESGDSNHAHS…IAKSKNKKKS (68 aa)) is disordered. Residues 114–124 (IEKHSSEKKEV) show a composition bias toward basic and acidic residues. The stretch at 133 to 167 (NGKDKKQKQQKQKQQKQQQQQKQNIAKSKNKKKSK) forms a coiled coil. A compositionally biased stretch (basic residues) spans 137–146 (KKQKQQKQKQ). Over residues 147-159 (QKQQQQQKQNIAK) the composition is skewed to low complexity. Transmembrane regions (helical) follow at residues 170 to 192 (YLNSVGIATAIGVSLHNFPEGVA), 207 to 229 (LMLAIAAHNIPEGMAVAAPIFSA), 237 to 257 (FKYCLYSGLCEPVGAIIFGLI), 271 to 291 (LAAVAGIMVFMVIKELLPAAF), and 301 to 321 (FSNIIGMIFFFFSIHFLHSML). Residues 328–372 (AGDGGHGHSHGGHGHSHGHGHSHGGHSHDSQHVESPQSSSFNAFA) form a disordered region. A compositionally biased stretch (basic residues) spans 334–352 (GHSHGGHGHSHGHGHSHGG). Polar residues predominate over residues 360-372 (VESPQSSSFNAFA).

This sequence belongs to the ZIP transporter (TC 2.A.5) family. ZupT subfamily.

Its subcellular location is the membrane. May transport divalent cations. May participate, with dstA, in the regulation of the differentiation of stalk cells during development. The sequence is that of Protein zntB (zntB) from Dictyostelium discoideum (Social amoeba).